The chain runs to 125 residues: MTERLPPELQTELVKLQQLQEQLNRVIAERSVIDSQLREVNKVLDELKQLPSDTIIYKIVGNLLVKVNKDNVEKELDDQKTILELRSRTYQNQETKLRTQLEEKQKKVNEMLSKYYPQRGAGAKA.

The protein belongs to the prefoldin subunit beta family. As to quaternary structure, heterohexamer of two alpha and four beta subunits.

Its subcellular location is the cytoplasm. Functionally, molecular chaperone capable of stabilizing a range of proteins. Seems to fulfill an ATP-independent, HSP70-like function in archaeal de novo protein folding. In Sulfolobus acidocaldarius (strain ATCC 33909 / DSM 639 / JCM 8929 / NBRC 15157 / NCIMB 11770), this protein is Prefoldin subunit beta.